We begin with the raw amino-acid sequence, 129 residues long: Basic blue protein (129 aa).

The N-terminal stretch at 1 to 33 (MAKGRGSASWSARAIVTLMAVSVLLLQADYVQA) is a signal peptide. The Phytocyanin domain maps to 34–129 (ATYTVGDSGI…SDMKIAVTAV (96 aa)). The Cu cation site is built by H72, C112, H117, and M122. C85 and C118 form a disulfide bridge.

As to expression, expressed in the inflorescence and in the transmitting tract of the pistil. Detected in roots, stems, cauline leaves, cotyledons, hypocotyls, guard cells, pistils, sepals, stamen filaments and vascular bundles of roots but not of leaves. Not expressed in petals, anthers or pollen.

Its subcellular location is the secreted. It is found in the extracellular space. The protein localises to the extracellular matrix. Forms a concentration gradient along the pollen tube growth path, with a lower level in the stigma papilla cell wall and a higher level in the transmitting tract extracellular matix of the style. In Arabidopsis thaliana (Mouse-ear cress), this protein is Basic blue protein (ARPN).